Here is a 696-residue protein sequence, read N- to C-terminus: Polyribonucleotide nucleotidyltransferase (696 aa).

Residues Asp-486 and Asp-492 each coordinate Mg(2+). Residues 553 to 612 (PRITQKQIPKDRIGELIGPGGKMIRAIIEQSGSEISVDDSGKVTIASPSEESKEKAIAMI) enclose the KH domain. Residues 622 to 690 (GKIYDGVIKR…KMGKIDLSRK (69 aa)) form the S1 motif domain.

Belongs to the polyribonucleotide nucleotidyltransferase family. Requires Mg(2+) as cofactor.

Its subcellular location is the cytoplasm. The enzyme catalyses RNA(n+1) + phosphate = RNA(n) + a ribonucleoside 5'-diphosphate. In terms of biological role, involved in mRNA degradation. Catalyzes the phosphorolysis of single-stranded polyribonucleotides processively in the 3'- to 5'-direction. This Leptospira biflexa serovar Patoc (strain Patoc 1 / ATCC 23582 / Paris) protein is Polyribonucleotide nucleotidyltransferase.